The chain runs to 257 residues: MSQIEFKDVSKVYPNGHVGLKDINLNIEKGDFAVIVGLSGAGKSTLLRSVNRLHDISKGDITIEGQSITKARGKKLLEMRRSIGMIFQHFNLVKRSTVLRNVLSGRVGYHPTWKMILGLFPKEDKVKALDALERVNILDKYDQRSDQLSGGQQQRISIARALCQEPTIILADEPVASLDPLTTKQVMDDLKKINEELGITILINLHFVDLAKEYGSRIIGLRAGELVYDGPASEANDEVFNHIYGRSIKDDEKLGVE.

Positions 4–248 (IEFKDVSKVY…VFNHIYGRSI (245 aa)) constitute an ABC transporter domain.

This sequence belongs to the ABC transporter superfamily. Phosphonates importer (TC 3.A.1.9.1) family. As to quaternary structure, the complex is composed of two ATP-binding proteins (PhnC), two transmembrane proteins (PhnE) and a solute-binding protein (PhnD).

It is found in the cell membrane. The enzyme catalyses phosphonate(out) + ATP + H2O = phosphonate(in) + ADP + phosphate + H(+). In terms of biological role, part of the ABC transporter complex PhnCDE involved in phosphonates import. Responsible for energy coupling to the transport system. The polypeptide is Phosphonates import ATP-binding protein PhnC (Staphylococcus epidermidis (strain ATCC 35984 / DSM 28319 / BCRC 17069 / CCUG 31568 / BM 3577 / RP62A)).